A 689-amino-acid chain; its full sequence is Methionine--tRNA ligase (689 aa).

The 'HIGH' region motif lies at P19–H29. 4 residues coordinate Zn(2+): C150, C153, C162, and C166. Residues G338 to S342 carry the 'KMSKS' region motif. T341 is an ATP binding site. One can recognise a tRNA-binding domain in the interval E591 to M689.

The protein belongs to the class-I aminoacyl-tRNA synthetase family. MetG type 1 subfamily. In terms of assembly, homodimer. Zn(2+) serves as cofactor.

It localises to the cytoplasm. It catalyses the reaction tRNA(Met) + L-methionine + ATP = L-methionyl-tRNA(Met) + AMP + diphosphate. Is required not only for elongation of protein synthesis but also for the initiation of all mRNA translation through initiator tRNA(fMet) aminoacylation. The polypeptide is Methionine--tRNA ligase (Halobacterium salinarum (strain ATCC 700922 / JCM 11081 / NRC-1) (Halobacterium halobium)).